The following is a 334-amino-acid chain: D-alanine--D-alanine ligase (334 aa).

The ATP-grasp domain maps to 121–327; that stretch reads KLWYDALDIP…FSEFLVQCVT (207 aa). 151-206 contributes to the ATP binding site; that stretch reads AFGHWGSIFVKAARQGSSVGCYKVTTEDQIAPAIEAAFGFSEQVLVEQAVKPRELE. Residues Asp281, Glu294, and Asn296 each coordinate Mg(2+).

It belongs to the D-alanine--D-alanine ligase family. Requires Mg(2+) as cofactor. Mn(2+) is required as a cofactor.

The protein localises to the cytoplasm. The enzyme catalyses 2 D-alanine + ATP = D-alanyl-D-alanine + ADP + phosphate + H(+). It functions in the pathway cell wall biogenesis; peptidoglycan biosynthesis. In terms of biological role, cell wall formation. The protein is D-alanine--D-alanine ligase of Vibrio cholerae serotype O1 (strain ATCC 39315 / El Tor Inaba N16961).